The chain runs to 496 residues: Angiopoietin-2 (496 aa).

An N-terminal signal peptide occupies residues 1–18 (MWQLVFFALSCDLVLAAA). N-linked (GlcNAc...) asparagine glycosylation is found at Asn89, Asn119, Asn133, Asn151, Asn240, and Asn304. Positions 130 to 255 (NLLNQTAEQT…KQQHDLMETV (126 aa)) form a coiled coil. A Fibrinogen C-terminal domain is found at 275-495 (KEEQIIFRDC…ATTMMIRPAD (221 aa)). The cysteines at positions 284 and 313 are disulfide-linked. Ca(2+) is bound by residues Asp429, Asp431, Cys433, and Cys435. Intrachain disulfides connect Cys433–Cys435 and Cys437–Cys450.

As to quaternary structure, interacts with TEK/TIE2, competing for the same binding site as ANGPT1. Interacts with ITGA5. Interacts with SVEP1/polydom. Interacts with THBD; this interaction significantly inhibits the generation of activated PC and TAFIa/CPB2 by the thrombin/thrombomodulin complex.

The protein resides in the secreted. In terms of biological role, binds to TEK/TIE2, competing for the ANGPT1 binding site, and modulating ANGPT1 signaling. Can induce tyrosine phosphorylation of TEK/TIE2 in the absence of ANGPT1. In the absence of angiogenic inducers, such as VEGF, ANGPT2-mediated loosening of cell-matrix contacts may induce endothelial cell apoptosis with consequent vascular regression. In concert with VEGF, it may facilitate endothelial cell migration and proliferation, thus serving as a permissive angiogenic signal. Involved in the regulation of lymphangiogenesis. This Sus scrofa (Pig) protein is Angiopoietin-2 (ANGPT2).